A 492-amino-acid polypeptide reads, in one-letter code: Transcript termination protein A18 (492 aa).

In terms of domain architecture, Helicase ATP-binding spans Met-100–Ser-256. Leu-113–Thr-120 is a binding site for ATP. Residues Asp-206–His-209 carry the DESH box motif.

This sequence belongs to the helicase family. Poxviruses subfamily. As to quaternary structure, interacts with G2. Might be part of a transcription complex composed at least of G2, A18, and H5.

It is found in the virion. DNA helicase which seems to act as a postreplicative transcription termination factor. Involved in ATP-dependent release of nascent RNA. Forms a stable complex with single-stranded DNA, and to a lesser extent RNA. In Bos taurus (Bovine), this protein is Transcript termination protein A18.